The primary structure comprises 607 residues: UvrABC system protein C (607 aa).

Positions 15–92 (SQPGSYQMKD…IKRYRPYFNI (78 aa)) constitute a GIY-YIG domain. Residues 197 to 232 (GKAISDIKKKMKRASDSTEYELAADFRDRLKFIDQT) form the UVR domain.

It belongs to the UvrC family. In terms of assembly, interacts with UvrB in an incision complex.

The protein localises to the cytoplasm. In terms of biological role, the UvrABC repair system catalyzes the recognition and processing of DNA lesions. UvrC both incises the 5' and 3' sides of the lesion. The N-terminal half is responsible for the 3' incision and the C-terminal half is responsible for the 5' incision. This Oenococcus oeni (strain ATCC BAA-331 / PSU-1) protein is UvrABC system protein C.